The sequence spans 492 residues: Zinc finger protein 385B (492 aa).

2 consecutive Matrin-type zinc fingers follow at residues 8-44 (KKLL…VKQL) and 143-173 (ISCN…KLKA). Residues 159–206 (EAHYKGSKHAKKLKAQESPKNKQKSAVAQDSGTKTITSTSTNTTTTTT) form a disordered region. Positions 189 to 206 (SGTKTITSTSTNTTTTTT) are enriched in low complexity. 2 Matrin-type zinc fingers span residues 303–337 (KKLL…LEAR) and 371–401 (FHCE…RVAG). Positions 388 to 420 (QHISSRRHKDRVAGKPTKPKYSPYNKQQRSSSS) are disordered.

It is found in the nucleus. Functionally, may play a role in p53/TP53-mediated apoptosis. The sequence is that of Zinc finger protein 385B (znf385b) from Danio rerio (Zebrafish).